The following is a 107-amino-acid chain: Nucleoid-associated protein BLi00029/BL02358 (107 aa).

The disordered stretch occupies residues 1 to 27; the sequence is MRGGMGNMQKMMKQMQKMQKDMQKAQE. Residues 8–17 show a composition bias toward low complexity; it reads MQKMMKQMQK. Basic and acidic residues predominate over residues 18–27; that stretch reads MQKDMQKAQE.

The protein belongs to the YbaB/EbfC family. In terms of assembly, homodimer.

It is found in the cytoplasm. The protein localises to the nucleoid. In terms of biological role, binds to DNA and alters its conformation. May be involved in regulation of gene expression, nucleoid organization and DNA protection. The chain is Nucleoid-associated protein BLi00029/BL02358 from Bacillus licheniformis (strain ATCC 14580 / DSM 13 / JCM 2505 / CCUG 7422 / NBRC 12200 / NCIMB 9375 / NCTC 10341 / NRRL NRS-1264 / Gibson 46).